Here is a 416-residue protein sequence, read N- to C-terminus: 26S proteasome regulatory subunit 8 (416 aa).

Residues 1 to 18 (MAPPASTASSADPSKPTA) are compositionally biased toward low complexity. The tract at residues 1–29 (MAPPASTASSADPSKPTAQKLTEESDEKT) is disordered. Residue 200–207 (GPPGTGKT) participates in ATP binding.

The protein belongs to the AAA ATPase family. In terms of assembly, component of the 19S proteasome regulatory particle complex. The 26S proteasome consists of a 20S core particle (CP) and two 19S regulatory subunits (RP). Interacts with elt-2.

It localises to the cytoplasm. The protein resides in the nucleus. Component of the 26S proteasome, a multiprotein complex involved in the ATP-dependent degradation of ubiquitinated proteins. This complex plays a key role in the maintenance of protein homeostasis by removing misfolded or damaged proteins, which could impair cellular functions, and by removing proteins whose functions are no longer required. Therefore, the proteasome participates in numerous cellular processes, including cell cycle progression, apoptosis, or DNA damage repair. Belongs to the heterohexameric ring of AAA (ATPases associated with diverse cellular activities) proteins that unfolds ubiquitinated target proteins that are concurrently translocated into a proteolytic chamber and degraded into peptides. In addition, regulates gene expression in response to bacterial infection. Binds to the GATA transcription factor elt-2 to control its transcriptional activity and thus the expression of elt-2-dependent genes in response to infection by Gram-negative bacteria such as P.aeruginosa. The protein is 26S proteasome regulatory subunit 8 of Caenorhabditis elegans.